The chain runs to 345 residues: UDP-3-O-acylglucosamine N-acyltransferase (345 aa).

H239 (proton acceptor) is an active-site residue.

Belongs to the transferase hexapeptide repeat family. LpxD subfamily. In terms of assembly, homotrimer.

The enzyme catalyses a UDP-3-O-[(3R)-3-hydroxyacyl]-alpha-D-glucosamine + a (3R)-hydroxyacyl-[ACP] = a UDP-2-N,3-O-bis[(3R)-3-hydroxyacyl]-alpha-D-glucosamine + holo-[ACP] + H(+). The protein operates within bacterial outer membrane biogenesis; LPS lipid A biosynthesis. In terms of biological role, catalyzes the N-acylation of UDP-3-O-acylglucosamine using 3-hydroxyacyl-ACP as the acyl donor. Is involved in the biosynthesis of lipid A, a phosphorylated glycolipid that anchors the lipopolysaccharide to the outer membrane of the cell. The sequence is that of UDP-3-O-acylglucosamine N-acyltransferase from Geobacter metallireducens (strain ATCC 53774 / DSM 7210 / GS-15).